The following is a 618-amino-acid chain: Proline--tRNA ligase (618 aa).

The protein belongs to the class-II aminoacyl-tRNA synthetase family. ProS type 1 subfamily. Homodimer.

The protein localises to the cytoplasm. The enzyme catalyses tRNA(Pro) + L-proline + ATP = L-prolyl-tRNA(Pro) + AMP + diphosphate. In terms of biological role, catalyzes the attachment of proline to tRNA(Pro) in a two-step reaction: proline is first activated by ATP to form Pro-AMP and then transferred to the acceptor end of tRNA(Pro). As ProRS can inadvertently accommodate and process non-cognate amino acids such as alanine and cysteine, to avoid such errors it has two additional distinct editing activities against alanine. One activity is designated as 'pretransfer' editing and involves the tRNA(Pro)-independent hydrolysis of activated Ala-AMP. The other activity is designated 'posttransfer' editing and involves deacylation of mischarged Ala-tRNA(Pro). The misacylated Cys-tRNA(Pro) is not edited by ProRS. This is Proline--tRNA ligase from Streptococcus pyogenes serotype M1.